The chain runs to 119 residues: UPF0102 protein FP2501 (119 aa).

It belongs to the UPF0102 family.

The chain is UPF0102 protein FP2501 from Flavobacterium psychrophilum (strain ATCC 49511 / DSM 21280 / CIP 103535 / JIP02/86).